The primary structure comprises 163 residues: Type-2 ice-structuring protein (163 aa).

The N-terminal stretch at methionine 1–alanine 17 is a signal peptide. A propeptide spanning residues asparagine 18–serine 34 is cleaved from the precursor. The 125-residue stretch at proline 39 to phenylalanine 163 folds into the C-type lectin domain. 5 disulfides stabilise this stretch: cysteine 41–cysteine 52, cysteine 69–cysteine 159, cysteine 103–cysteine 134, cysteine 123–cysteine 145, and cysteine 135–cysteine 151.

Post-translationally, the N-terminus is blocked.

The protein localises to the secreted. In terms of biological role, antifreeze proteins lower the blood freezing point. The sequence is that of Type-2 ice-structuring protein from Hemitripterus americanus (Sea raven).